A 227-amino-acid polypeptide reads, in one-letter code: UPF0758 protein Pcar_0065 (227 aa).

The 123-residue stretch at R105 to L227 folds into the MPN domain. Zn(2+) is bound by residues H176, H178, and D189. The JAMM motif signature appears at H176–D189.

The protein belongs to the UPF0758 family.

The protein is UPF0758 protein Pcar_0065 of Syntrophotalea carbinolica (strain DSM 2380 / NBRC 103641 / GraBd1) (Pelobacter carbinolicus).